The primary structure comprises 834 residues: MDPPKLTFISKRDTKKKDEVNKEQPTKNLKILDLFSNDEEFSNPTQEEPTNTLQEKLMNVDPLEFFSKGGLKEEQKKERDDHRDDYRDSRDRDRDYRDNGGRDRDRDYRDGGGGGGGRDRDRNRDRDRDRDRDYRDGGGGRDRYRDNDRYRDTDRYRDNDRRDGSGSGSSRRRDERRENSGRRDYRDNDRRDDRRDNGRYGRDNDNSGGGGSGKNSSDKKEEINPVSNNNDIHKDRIKRDTTQFSHKVFEQINNKRDREDPELRDIKVDYMGIKRDENRKKIKGEKGKFVFEWDSSEDTSSDYNTLYTKKLEIQPQFGHGNFGGYEKNNNNNGNHYNGNIYNNNNNNNNNNNNNNNINNNNNGSMIGGKQISELPDTHWSKKPLKSMTKRDWHIFKEDFNISTKGGIAPNPIRTWQESNLPREILEAIRQLGYEKPSPIQMQSIPISLTGRDILGIAETGSGKTCAFVIPMLIYISKQPRLTKDTEADGPYALVMAPTRELVQQIEKETRNFAQHFGFRVVSLVGGQSIEDQAYQVSKGCEIIIATPGRLNDCLEKRYLVLNQCNYIVLDEADMMIDLGFEPQVTSVLDAMPSSFLKSEDDEMAEKQESDRSHIYRTTILFSATMPPLVEKLSKKYLRRPCTITIGEAGKVVDRIRQTVIFVKSENDKKEHLTQLIKDGPPPPIIIFVNKKKHCDIIAPVLEECRVSYTILHSGRSQEQREAALEGFKKRKYEVLIATGVASRGIHVDGVTHVINFDIPKNIEDYTHRIGRTGRAGSAGLASSFITDKDVEIMYDLKQILTSTNNIVPIELLKHPSSQQKHGSSKDHNKSVIFK.

2 disordered regions span residues 1 to 245 and 322 to 371; these read MDPP…TQFS and FGGY…GKQI. The span at 10 to 25 shows a compositional bias: basic and acidic residues; the sequence is SKRDTKKKDEVNKEQP. Residues 42–54 are compositionally biased toward polar residues; the sequence is SNPTQEEPTNTLQ. 4 stretches are compositionally biased toward basic and acidic residues: residues 70 to 110, 117 to 164, 171 to 205, and 231 to 245; these read GLKE…DYRD, GRDR…RRDG, RRRD…RDND, and DIHK…TQFS. Residues 328–362 show a composition bias toward low complexity; that stretch reads NNNNNGNHYNGNIYNNNNNNNNNNNNNNNINNNNN. The Q motif motif lies at 413–441; that stretch reads RTWQESNLPREILEAIRQLGYEKPSPIQM. A Helicase ATP-binding domain is found at 444–643; it reads IPISLTGRDI…KKYLRRPCTI (200 aa). Position 457-464 (457-464) interacts with ATP; sequence AETGSGKT. Residues 570–573 carry the DEAD box motif; it reads DEAD. Positions 654-815 constitute a Helicase C-terminal domain; the sequence is RIRQTVIFVK…IVPIELLKHP (162 aa). The tract at residues 813–834 is disordered; sequence KHPSSQQKHGSSKDHNKSVIFK. Positions 823–834 are enriched in basic and acidic residues; it reads SSKDHNKSVIFK.

The protein belongs to the DEAD box helicase family. DDX23/PRP28 subfamily.

The protein resides in the cytoplasm. It localises to the nucleus. It carries out the reaction ATP + H2O = ADP + phosphate + H(+). Probable ATP-dependent RNA helicase which may be involved in mRNA splicing. The sequence is that of ATP-dependent RNA helicase ddx23 (helB2) from Dictyostelium discoideum (Social amoeba).